Here is a 464-residue protein sequence, read N- to C-terminus: V-type ATP synthase beta chain (464 aa).

Belongs to the ATPase alpha/beta chains family.

Functionally, produces ATP from ADP in the presence of a proton gradient across the membrane. The V-type beta chain is a regulatory subunit. The protein is V-type ATP synthase beta chain of Streptococcus gordonii (strain Challis / ATCC 35105 / BCRC 15272 / CH1 / DL1 / V288).